The primary structure comprises 301 residues: uncharacterized protein (301 aa).

The 58-residue stretch at 1-58 (MDIRHLTYFLEVARLKSFTKASQSLYVSQPTISKMIKNLEEELGIELFYRNGRQVELT) folds into the HTH lysR-type domain. Residues 18–37 (FTKASQSLYVSQPTISKMIK) constitute a DNA-binding region (H-T-H motif).

This sequence belongs to the LysR transcriptional regulatory family.

This is an uncharacterized protein from Bacillus subtilis (strain 168).